Here is a 263-residue protein sequence, read N- to C-terminus: 5'-nucleotidase SurE (263 aa).

Positions 11, 12, 42, and 96 each coordinate a divalent metal cation.

It belongs to the SurE nucleotidase family. Requires a divalent metal cation as cofactor.

It localises to the cytoplasm. The catalysed reaction is a ribonucleoside 5'-phosphate + H2O = a ribonucleoside + phosphate. Nucleotidase that shows phosphatase activity on nucleoside 5'-monophosphates. This Methanocorpusculum labreanum (strain ATCC 43576 / DSM 4855 / Z) protein is 5'-nucleotidase SurE.